A 199-amino-acid polypeptide reads, in one-letter code: Acireductone dioxygenase 2 (199 aa).

His98, His100, Glu104, and His143 together coordinate Fe(2+). Residues His98, His100, Glu104, and His143 each contribute to the Ni(2+) site.

The protein belongs to the acireductone dioxygenase (ARD) family. Fe(2+) serves as cofactor. Ni(2+) is required as a cofactor.

The protein localises to the cytoplasm. It localises to the nucleus. It carries out the reaction 1,2-dihydroxy-5-(methylsulfanyl)pent-1-en-3-one + O2 = 4-methylsulfanyl-2-oxobutanoate + formate + 2 H(+). The enzyme catalyses 1,2-dihydroxy-5-(methylsulfanyl)pent-1-en-3-one + O2 = 3-(methylsulfanyl)propanoate + CO + formate + 2 H(+). Its pathway is amino-acid biosynthesis; L-methionine biosynthesis via salvage pathway; L-methionine from S-methyl-5-thio-alpha-D-ribose 1-phosphate: step 5/6. In terms of biological role, catalyzes 2 different reactions between oxygen and the acireductone 1,2-dihydroxy-3-keto-5-methylthiopentene (DHK-MTPene) depending upon the metal bound in the active site. Fe-containing acireductone dioxygenase (Fe-ARD) produces formate and 2-keto-4-methylthiobutyrate (KMTB), the alpha-ketoacid precursor of methionine in the methionine recycle pathway. Ni-containing acireductone dioxygenase (Ni-ARD) produces methylthiopropionate, carbon monoxide and formate, and does not lie on the methionine recycle pathway. The chain is Acireductone dioxygenase 2 from Vitis vinifera (Grape).